We begin with the raw amino-acid sequence, 60 residues long: Potassium channel toxin Tst-beta-KTx (60 aa).

One can recognise a BetaSPN-type CS-alpha/beta domain in the interval Gln26–Asp60. 3 disulfides stabilise this stretch: Cys29–Cys50, Cys36–Cys55, and Cys40–Cys57.

This sequence belongs to the long chain scorpion toxin family. Class 1 subfamily. As to expression, expressed by the venom gland.

It is found in the secreted. Functionally, inhibits voltage-gated potassium channels Kv1.1/KCNA1, Kv1.2/KCNA2, and Kv1.3/KCNA3. Its function is as follows. Does not induce hemolytic activity, lactate dehydrogenase (LDH) release from mast cells, mast cell degranulation, and antimicrobial effects. In vivo, injection into mice causes moderate edema formation, but induces very weak or no change in nociceptive sensibility. It also reduces mice locomotion, suggesting an increase in anxiety, but causes no alteration in rearing (standing on hind limbs). This is Potassium channel toxin Tst-beta-KTx from Tityus stigmurus (Brazilian scorpion).